Reading from the N-terminus, the 154-residue chain is Large ribosomal subunit protein uL13 (154 aa).

Belongs to the universal ribosomal protein uL13 family. Part of the 50S ribosomal subunit.

In terms of biological role, this protein is one of the early assembly proteins of the 50S ribosomal subunit, although it is not seen to bind rRNA by itself. It is important during the early stages of 50S assembly. The polypeptide is Large ribosomal subunit protein uL13 (Mesorhizobium japonicum (strain LMG 29417 / CECT 9101 / MAFF 303099) (Mesorhizobium loti (strain MAFF 303099))).